Reading from the N-terminus, the 286-residue chain is Translocon-associated protein subunit alpha (286 aa).

The first 21 residues, 1–21, serve as a signal peptide directing secretion; that stretch reads MRLLPRLLLLFLLAFPAAVLL. Residues 22-207 lie on the Lumenal side of the membrane; that stretch reads RGGPGGSLAL…EREDGLDGET (186 aa). The span at 46-75 shows a compositional bias: acidic residues; it reads IIEDEDDEAEVEEDEPTDLAEDKEEEDVSS. A disordered region spans residues 46-83; the sequence is IIEDEDDEAEVEEDEPTDLAEDKEEEDVSSEPEASPSA. Asn136 and Asn191 each carry an N-linked (GlcNAc...) asparagine glycan. A helical membrane pass occupies residues 208 to 228; it reads IFMYMFLAGLGLLVVVGLHQL. Residues 229–286 are Cytoplasmic-facing; it reads LESRKRKRPIQKVEMGTSSQNDVDMSWIPQETLNQINKASPRRQPRKRAQKRSVGSDE. The disordered stretch occupies residues 236-286; that stretch reads RPIQKVEMGTSSQNDVDMSWIPQETLNQINKASPRRQPRKRAQKRSVGSDE. Positions 244-266 are enriched in polar residues; the sequence is GTSSQNDVDMSWIPQETLNQINK. Position 247 is a phosphoserine (Ser247). Thr260 carries the post-translational modification Phosphothreonine. Residue Ser268 is modified to Phosphoserine. Positions 268-279 are enriched in basic residues; it reads SPRRQPRKRAQK.

It belongs to the TRAP-alpha family. As to quaternary structure, heterotetramer of TRAP-alpha, TRAP-beta, TRAP-delta and TRAP-gamma. Interacts with palmitoylated calnexin (CALX), the interaction is required for efficient folding of glycosylated proteins.

It localises to the endoplasmic reticulum membrane. TRAP proteins are part of a complex whose function is to bind calcium to the ER membrane and thereby regulate the retention of ER resident proteins. May be involved in the recycling of the translocation apparatus after completion of the translocation process or may function as a membrane-bound chaperone facilitating folding of translocated proteins. In Mus musculus (Mouse), this protein is Translocon-associated protein subunit alpha (Ssr1).